The following is a 1212-amino-acid chain: Peregrin (1212 aa).

The C2H2-type zinc-finger motif lies at 21-47; the sequence is YECPVETCRKVYKSYSGIEYHLYHYDH. 2 disordered regions span residues 43-87 and 118-176; these read YHYD…SPGR and VVSE…PKLP. Positions 58-67 are enriched in basic residues; that stretch reads LRKHKKKGRQ. The interval 59 to 221 is interaction with KAT6A and KAT6B; it reads RKHKKKGRQS…VEYDMDEEDY (163 aa). The span at 74 to 85 shows a compositional bias: low complexity; it reads QSPSPSEVSQSP. Residues 119–130 are compositionally biased toward acidic residues; sequence VSEDEEAPEEAP. Ser-120 is subject to Phosphoserine. The residue at position 147 (Lys-147) is an N6-acetyllysine. The span at 148–166 shows a compositional bias: basic residues; the sequence is SGKHKNKEKRKDSNHHHHS. At Ser-237 the chain carries Phosphoserine. The segment at 272 to 322 adopts a PHD-type 1 zinc-finger fold; it reads DAVCCICNDGECQNSNVILFCDMCNLAVHQECYGVPYIPEGQWLCRRCLQS. The C2HC pre-PHD-type zinc finger occupies 326 to 359; it reads AVDCALCPNKGGAFKQTDDGRWAHVVCALWIPEV. The PHD-type 2 zinc finger occupies 383–447; the sequence is LTCYICKQRG…RKTAYCDIHT (65 aa). A disordered region spans residues 447–489; the sequence is TPPGSARRLPALSHSEGEEEEDEEEDEGKSWSSEKVKKAKAKS. Phosphoserine occurs at positions 459 and 461. A compositionally biased stretch (acidic residues) spans 463 to 473; the sequence is GEEEEDEEEDE. The tract at residues 500–819 is interaction with MEAF6 and ING5; that stretch reads LAEKRAAAPV…IKKEMTALRR (320 aa). The segment at 542 to 1077 is required for RUNX1 and RUNX2 transcriptional activation; it reads YWTLKRQSRN…RGAGWLSEDE (536 aa). At Lys-579 the chain carries N6-acetyllysine. The Bromo domain maps to 627–731; the sequence is MQLTPFLILL…EQGGAVLRQA (105 aa). Residues 817-1060 form a disordered region; that stretch reads LRRKLAHQRE…VGTGRGVGHS (244 aa). Residues 823–836 show a composition bias toward basic and acidic residues; the sequence is HQRETGRDGPERHG. Thr-856 is subject to Phosphothreonine. Low complexity predominate over residues 856–869; sequence TDSAAEESSSQETS. Residues Ser-858, Ser-915, Ser-920, and Ser-924 each carry the phosphoserine modification. Residues 993–1019 show a composition bias toward low complexity; it reads PRSSSDSESSSSSSSSAASDRTSTTPS. Position 1074 is a phosphoserine (Ser-1074). One can recognise a PWWP domain in the interval 1083–1166; the sequence is ALDLVWAKCR…RTKLVPLGVN (84 aa). Ser-1185 bears the Phosphoserine mark.

In terms of assembly, component of some HBO1 complex composed of KAT7/HBO1, MEAF6, ING5, and BRPF1. Component of the MOZ/MORF complex composed at least of ING5, KAT6A, KAT6B, MEAF6 and one of BRPF1, BRD1/BRPF2 and BRPF3. Interacts (via PHD-type zinc finger domains) with unmethylated histone H3 at 'Lys-4' (H3K4me0). Interacts with trimethylated 'Lys-36' of histone H3 (H3K36me3). Interacts with ING5; interaction directs BRPF1 to H4K4me3-enriched chromatin at the 5' of active genes. Interacts with KAT7. In terms of processing, acetylated by KAT6A. As to expression, expressed at low level in most tissues, with high expression in the testis and specific regions of the brain.

The protein resides in the nucleus. It is found in the chromosome. The protein localises to the cytoplasm. Functionally, scaffold subunit of various histone acetyltransferase (HAT) complexes, such as the MOZ/MORF and HBO1 complexes, which have a histone H3 acetyltransferase activity. Plays a key role in HBO1 complex by directing KAT7/HBO1 specificity towards histone H3 'Lys-14' acetylation (H3K14ac). Some HAT complexes preferentially mediate histone H3 'Lys-23' (H3K23ac) acetylation. Positively regulates the transcription of RUNX1 and RUNX2. The chain is Peregrin from Mus musculus (Mouse).